A 63-amino-acid chain; its full sequence is Large ribosomal subunit protein bL28 (63 aa).

Residues Met1–Ala21 are disordered.

Belongs to the bacterial ribosomal protein bL28 family.

The chain is Large ribosomal subunit protein bL28 from Mycoplasmopsis pulmonis (strain UAB CTIP) (Mycoplasma pulmonis).